Reading from the N-terminus, the 183-residue chain is Peptidyl-prolyl cis-trans isomerase H (183 aa).

The 164-residue stretch at 19–182 (FFDVALGGEP…QDVVIIQCGE (164 aa)) folds into the PPIase cyclophilin-type domain.

The protein belongs to the cyclophilin-type PPIase family. PPIase H subfamily.

It localises to the nucleus. It catalyses the reaction [protein]-peptidylproline (omega=180) = [protein]-peptidylproline (omega=0). Its function is as follows. PPIases accelerate the folding of proteins. It catalyzes the cis-trans isomerization of proline imidic peptide bonds in oligopeptides. The polypeptide is Peptidyl-prolyl cis-trans isomerase H (cyp3) (Emericella nidulans (strain FGSC A4 / ATCC 38163 / CBS 112.46 / NRRL 194 / M139) (Aspergillus nidulans)).